The following is a 390-amino-acid chain: Neuromedin-B receptor (390 aa).

The segment covering 1 to 19 (MPSKSLSNLSVTTGANESG) has biased composition (polar residues). A disordered region spans residues 1–22 (MPSKSLSNLSVTTGANESGSVP). At 1-41 (MPSKSLSNLSVTTGANESGSVPEGWERDFLPASDGTTTELV) the chain is on the extracellular side. Asn8 and Asn16 each carry an N-linked (GlcNAc...) asparagine glycan. The helical transmembrane segment at 42–65 (IRCVIPSLYLLIITVGLLGNIMLV) threads the bilayer. Over 66 to 79 (KIFITNSAMRSVPN) the chain is Cytoplasmic. The helical transmembrane segment at 80 to 99 (IFISNLAAGDLLLLLTCVPV) threads the bilayer. Residues 100 to 117 (DASRYFFDEWMFGKVGCK) are Extracellular-facing. The cysteines at positions 116 and 198 are disulfide-linked. Residues 118 to 139 (LIPVIQLTSVGVSVFTLTALSA) form a helical membrane-spanning segment. At 140 to 156 (DRYRAIVNPMDMQTSGA) the chain is on the cytoplasmic side. A helical transmembrane segment spans residues 157 to 177 (LLRTCVKAMGIWVVSVLLAVP). The Extracellular portion of the chain corresponds to 178–211 (EAVFSEVARISSLDNSSFTACIPYPQTDELHPKI). An N-linked (GlcNAc...) asparagine glycan is attached at Asn192. A helical transmembrane segment spans residues 212–235 (HSVLIFLVYFLIPLAIISIYYYHI). The Cytoplasmic segment spans residues 236-266 (AKTLIKSAHNLPGEYNEHTKKQMETRKRLAK). The helical transmembrane segment at 267 to 287 (IVLVFVGCFIFCWFPNHILYM) threads the bilayer. The Extracellular segment spans residues 288 to 299 (YRSFNYNEIDPS). Residues 300–327 (LGHMIVTLVARVLSFGNSCVNPFALYLL) traverse the membrane as a helical segment. The Cytoplasmic portion of the chain corresponds to 328-390 (SESFRRHFNS…GHSMKQEMAL (63 aa)). Cys341 is lipidated: S-palmitoyl cysteine. A Phosphoserine modification is found at Ser352.

It belongs to the G-protein coupled receptor 1 family. In terms of tissue distribution, expressed in epididymis (at protein level).

It is found in the cell membrane. Functionally, receptor for neuromedin-B. Contributes to the maintenance of basal sigh rate through signaling in the pre-Botzinger complex, a cluster of several thousand neurons in the ventrolateral medulla responsible for inspiration during respiratory activity. Contributes to the induction of sneezing following exposure to chemical irritants or allergens which causes release of NMB by nasal sensory neurons and activation of NMBR-expressing neurons in the sneeze-evoking region of the brainstem. These in turn activate neurons of the caudal ventral respiratory group, giving rise to the sneezing response. Contributes to induction of acute itch, possibly through its activation on dorsal root ganglion neurons by the NMB peptide. Plays a role in the innate immune response to influenza A virus infection by enhancing interferon alpha expression and reducing expression of IL6. Plays a role in CSF1-induced proliferation of osteoclast precursors by contributing to the positive regulation of the expression of the CSF1 receptor CSF1R. This Homo sapiens (Human) protein is Neuromedin-B receptor (NMBR).